A 274-amino-acid polypeptide reads, in one-letter code: Indole-3-glycerol phosphate synthase (274 aa).

The protein belongs to the TrpC family.

It carries out the reaction 1-(2-carboxyphenylamino)-1-deoxy-D-ribulose 5-phosphate + H(+) = (1S,2R)-1-C-(indol-3-yl)glycerol 3-phosphate + CO2 + H2O. The protein operates within amino-acid biosynthesis; L-tryptophan biosynthesis; L-tryptophan from chorismate: step 4/5. This Kineococcus radiotolerans (strain ATCC BAA-149 / DSM 14245 / SRS30216) protein is Indole-3-glycerol phosphate synthase.